Here is a 327-residue protein sequence, read N- to C-terminus: Eukaryotic translation initiation factor 3 subunit I (327 aa).

WD repeat units lie at residues 8-49 (GHER…GSYD), 51-89 (HNGAVWDIDVSWDTTKCVTASGDLTVKIWDAELGNCLYT), 188-227 (VHRYSVQDLQLSPRGDFLISASRDKTAALLDVNDLKKLKQ), 229-268 (KSERPVNSACISPNRDHICLGGGEDAMQVTQTSVSAGHFE), and 285-324 (GHFGPINTMAWHPSGTIIATGGEDGYIRIQEFDEDYLGFT).

Belongs to the eIF-3 subunit I family. Component of the eukaryotic translation initiation factor 3 (eIF-3) complex.

It is found in the cytoplasm. Component of the eukaryotic translation initiation factor 3 (eIF-3) complex, which is involved in protein synthesis of a specialized repertoire of mRNAs and, together with other initiation factors, stimulates binding of mRNA and methionyl-tRNAi to the 40S ribosome. The eIF-3 complex specifically targets and initiates translation of a subset of mRNAs involved in cell proliferation. The sequence is that of Eukaryotic translation initiation factor 3 subunit I from Caenorhabditis elegans.